The sequence spans 1363 residues: Spike glycoprotein (1363 aa).

The N-terminal stretch at methionine 1–phenylalanine 13 is a signal peptide. At alanine 14–proline 1307 the chain is on the extracellular side. The BetaCoV S1-NTD domain occupies valine 15–threonine 298. Disulfide bonds link cysteine 21-cysteine 165, cysteine 160-cysteine 193, cysteine 172-cysteine 252, cysteine 286-cysteine 296, and cysteine 331-cysteine 356. Asparagine 59 and asparagine 133 each carry an N-linked (GlcNAc...) asparagine; by host glycan. An N-linked (GlcNAc...) asparagine; by host glycan is attached at asparagine 198. The region spanning proline 329–threonine 617 is the BetaCoV S1-CTD domain. Residue asparagine 359 is glycosylated (N-linked (GlcNAc...) asparagine; by host). 2 disulfide bridges follow: cysteine 374–cysteine 427 and cysteine 386–cysteine 615. N-linked (GlcNAc...) asparagine; by host glycans are attached at residues asparagine 437, asparagine 649, asparagine 676, asparagine 696, asparagine 714, asparagine 739, and asparagine 788. Fusion peptide regions lie at residues serine 914–tyrosine 935 and glutamate 933–tyrosine 953. N-linked (GlcNAc...) asparagine; by host glycosylation occurs at asparagine 937. A disulfide bridge links cysteine 938 with cysteine 949. The tract at residues glutamine 1014 to phenylalanine 1064 is heptad repeat 1. The stretch at glutamine 1043–isoleucine 1087 forms a coiled coil. N-linked (GlcNAc...) asparagine; by host glycans are attached at residues asparagine 1194, asparagine 1224, asparagine 1234, asparagine 1253, asparagine 1267, and asparagine 1288. The heptad repeat 2 stretch occupies residues alanine 1258–aspartate 1296. Residues threonine 1269–isoleucine 1297 adopt a coiled-coil conformation. Residues tryptophan 1308–isoleucine 1328 form a helical membrane-spanning segment. Residues cysteine 1329 to aspartate 1363 lie on the Cytoplasmic side of the membrane. Residues threonine 1359–aspartate 1363 carry the KxHxx motif.

It belongs to the betacoronaviruses spike protein family. Homotrimer; each monomer consists of a S1 and a S2 subunit. The resulting peplomers protrude from the virus surface as spikes. Specific enzymatic cleavages in vivo yield mature proteins. The precursor is processed into S1 and S2 by host cell furin or another cellular protease to yield the mature S1 and S2 proteins. Additionally, a second cleavage leads to the release of a fusion peptide after viral attachment to host cell receptor. In terms of processing, the cytoplasmic Cys-rich domain is palmitoylated. Spike glycoprotein is digested within host endosomes.

The protein localises to the virion membrane. The protein resides in the host endoplasmic reticulum-Golgi intermediate compartment membrane. It is found in the host cell membrane. Functionally, attaches the virion to the cell membrane by interacting with host receptor, initiating the infection. Mediates fusion of the virion and cellular membranes by acting as a class I viral fusion protein. Under the current model, the protein has at least three conformational states: pre-fusion native state, pre-hairpin intermediate state, and post-fusion hairpin state. During viral and target cell membrane fusion, the coiled coil regions (heptad repeats) assume a trimer-of-hairpins structure, positioning the fusion peptide in close proximity to the C-terminal region of the ectodomain. The formation of this structure appears to drive apposition and subsequent fusion of viral and target cell membranes. In terms of biological role, acts as a viral fusion peptide which is unmasked following S2 cleavage occurring upon virus endocytosis. This is Spike glycoprotein from Bovine coronavirus (strain 98TXSF-110-LUN) (BCoV-LUN).